The following is a 586-amino-acid chain: Clathrin heavy chain linker domain-containing protein 1 (586 aa).

Residues 174 to 232 are a coiled coil; that stretch reads MNLDALTKYMKHLEDKYAEIKQAMLIKYVPAQRKSDLDEEMIVLLKRRDVAENLNRKLQ.

In Macaca fascicularis (Crab-eating macaque), this protein is Clathrin heavy chain linker domain-containing protein 1 (CLHC1).